A 212-amino-acid polypeptide reads, in one-letter code: Small ribosomal subunit protein eS1 (212 aa).

This sequence belongs to the eukaryotic ribosomal protein eS1 family.

The protein is Small ribosomal subunit protein eS1 of Haloquadratum walsbyi (strain DSM 16790 / HBSQ001).